Reading from the N-terminus, the 151-residue chain is Large ribosomal subunit protein uL15 (151 aa).

A compositionally biased stretch (basic residues) spans 1-14 (MRREKKSRAYRGSR). Residues 1–33 (MRREKKSRAYRGSRTHGWGRVGQHRKSGSRGGR) are disordered.

This sequence belongs to the universal ribosomal protein uL15 family. Part of the 50S ribosomal subunit.

Its function is as follows. Binds to the 23S rRNA. The sequence is that of Large ribosomal subunit protein uL15 from Thermofilum pendens (strain DSM 2475 / Hrk 5).